The chain runs to 101 residues: DNA-directed RNA polymerase subunit omega (101 aa).

Residues Met-1–Ser-13 show a composition bias toward low complexity. The disordered stretch occupies residues Met-1–Thr-22.

It belongs to the RNA polymerase subunit omega family. The RNAP catalytic core consists of 2 alpha, 1 beta, 1 beta' and 1 omega subunit. When a sigma factor is associated with the core the holoenzyme is formed, which can initiate transcription.

The catalysed reaction is RNA(n) + a ribonucleoside 5'-triphosphate = RNA(n+1) + diphosphate. Its function is as follows. Promotes RNA polymerase assembly. Latches the N- and C-terminal regions of the beta' subunit thereby facilitating its interaction with the beta and alpha subunits. The chain is DNA-directed RNA polymerase subunit omega from Rhodococcus jostii (strain RHA1).